The primary structure comprises 193 residues: Acyl-homoserine-lactone synthase (193 aa).

It belongs to the autoinducer synthase family.

The catalysed reaction is a fatty acyl-[ACP] + S-adenosyl-L-methionine = an N-acyl-L-homoserine lactone + S-methyl-5'-thioadenosine + holo-[ACP] + H(+). Functionally, required for the synthesis of N-(3-oxodecanoyl)-L-homoserine lactone (ODHL), an autoinducer molecule which binds to VanR. This chain is Acyl-homoserine-lactone synthase (vanI), found in Vibrio anguillarum (Listonella anguillarum).